A 218-amino-acid chain; its full sequence is Ras-related protein Rab-27B (218 aa).

Threonine 2 carries the post-translational modification N-acetylthreonine. 16–24 (GDSGVGKTT) contributes to the GTP binding site. An Effector region motif is present at residues 38-46 (FITTVGIDF). Residues 74–78 (DTAGQ), 133–136 (NKAD), and 163–165 (SAA) each bind GTP. Cysteine 123 and cysteine 188 are oxidised to a cystine. Residues 193–218 (HIPDTVNGSSSGKLDGEKSAEKKCAC) are disordered. The span at 206-218 (LDGEKSAEKKCAC) shows a compositional bias: basic and acidic residues. 2 S-geranylgeranyl cysteine lipidation sites follow: cysteine 216 and cysteine 218. Cysteine 218 bears the Cysteine methyl ester mark.

Belongs to the small GTPase superfamily. Rab family. As to quaternary structure, interacts with SYTL2, SYTL4, MYRIP and MLPH. Interacts with RPH3A and RPH3A. Interacts (GDP-bound form preferentially) with DENND10. In terms of tissue distribution, expressed at an extraordinary high level (0.1% of total protein) in urothelium.

It is found in the membrane. The protein resides in the late endosome. It carries out the reaction GTP + H2O = GDP + phosphate + H(+). Its activity is regulated as follows. Regulated by guanine nucleotide exchange factors (GEFs) which promote the exchange of bound GDP for free GTP, GTPase activating proteins (GAPs) which increase the GTP hydrolysis activity, and GDP dissociation inhibitors which inhibit the dissociation of the nucleotide from the GTPase. Activated by GEFs such as DENND10. Functionally, small GTPase which cycles between active GTP-bound and inactive GDP-bound states. In its active state, binds to a variety of effector proteins to regulate homeostasis of late endocytic pathway, including endosomal positioning, maturation and secretion. Plays a role in NTRK2/TRKB axonal anterograde transport by facilitating the association of NTRK2/TRKB with KLC1. May be involved in targeting uroplakins to urothelial apical membranes. The polypeptide is Ras-related protein Rab-27B (RAB27B) (Bos taurus (Bovine)).